The following is a 700-amino-acid chain: Putative cysteine-rich receptor-like protein kinase 30 (700 aa).

The N-terminal stretch at 1–24 (MRQNNLFSLIFWLVPVSLIIVVSA) is a signal peptide. 2 consecutive Gnk2-homologous domains span residues 25-129 (QLCS…NQPS) and 135-250 (LESV…LYPF). Topologically, residues 25 to 285 (QLCSEKFGTF…KDEKTIHTGT (261 aa)) are extracellular. 5 N-linked (GlcNAc...) asparagine glycosylation sites follow: N63, N105, N146, N150, and N191. Residues 286-306 (IIGIVIVVAMVIIMALLALGV) traverse the membrane as a helical segment. The Cytoplasmic portion of the chain corresponds to 307-700 (SVCRSRKKYQ…SKSMYRNTED (394 aa)). One can recognise a Protein kinase domain in the interval 346 to 626 (FLASNKIGQG…IFQMLTNSSI (281 aa)). ATP is bound by residues 352 to 360 (IGQGGFGEV) and K374. The active-site Proton acceptor is the D474. S478 is modified (phosphoserine). At T514 the chain carries Phosphothreonine. The residue at position 522 (Y522) is a Phosphotyrosine.

It belongs to the protein kinase superfamily. Ser/Thr protein kinase family. CRK subfamily.

It is found in the membrane. The catalysed reaction is L-seryl-[protein] + ATP = O-phospho-L-seryl-[protein] + ADP + H(+). It catalyses the reaction L-threonyl-[protein] + ATP = O-phospho-L-threonyl-[protein] + ADP + H(+). This is Putative cysteine-rich receptor-like protein kinase 30 (CRK30) from Arabidopsis thaliana (Mouse-ear cress).